The sequence spans 809 residues: Chorion peroxidase (809 aa).

The first 21 residues, 1–21 (MSRILFILLLLIVTQLSELQA), serve as a signal peptide directing secretion. A propeptide spanning residues 22-223 (AAFSVRQNRF…KFTETPLAHH (202 aa)) is cleaved from the precursor. The segment at 36 to 55 (DLQTPAPLATSTESSKKPEK) is disordered. N110 carries an N-linked (GlcNAc...) asparagine glycan. Residue C224 is modified to N-acetylcysteine; in Chorion peroxidase light chain. Cysteines 230 and 244 form a disulfide. H320 acts as the Proton acceptor in catalysis. A disulfide bond links C448 and C457. A heme b-binding site is contributed by H568. Cysteines 765 and 794 form a disulfide.

It belongs to the peroxidase family. XPO subfamily. In terms of assembly, heterodimer. Heme b is required as a cofactor. In terms of tissue distribution, expressed at low levels in the germarium and early follicles. Expression becomes progressively stronger during vitellogenesis, and is highly expressed in germ cells and somatic cells. A subset of follicle cells, termed border cells (BC), exhibit a high level of expression.

The protein resides in the secreted. The catalysed reaction is 2 a phenolic donor + H2O2 = 2 a phenolic radical donor + 2 H2O. Functionally, required for ovarian follicle maturation. Involved in the formation of a rigid and insoluble egg chorion by catalyzing chorion protein cross-linking through dityrosine formation and phenol oxidase-catalyzed chorion melanization. The chain is Chorion peroxidase (Pxt) from Drosophila melanogaster (Fruit fly).